The chain runs to 293 residues: MTVGSGHRWPEPSMHPTEIAYAKINLALHVRRRRADGYHDIETIFAFAEHGDIVAAEPGPARLMLAGPFAPALAGEDPEDNLVMRAADGLCALAGEAARPAIRLDKRLPVAAGIGGGSADAAAVLRLLGRAYGIAADDPRVMTLAATLGADVPACVRSATVRGGERGDRLESIAADGLHGLPLLLVNPRVALPTGPVFAAWDRVDRGPLAPGDPLAAALAGRNDLEAPATLLHPVIGEVVTLLAAQPGAILARMSGSGATCFALFGSEADRDAADRALAHRRPDWWRLTSRLR.

K23 is a catalytic residue. ATP is bound at residue 109-119; it reads PVAAGIGGGSA. Residue D151 is part of the active site.

This sequence belongs to the GHMP kinase family. IspE subfamily.

It carries out the reaction 4-CDP-2-C-methyl-D-erythritol + ATP = 4-CDP-2-C-methyl-D-erythritol 2-phosphate + ADP + H(+). The protein operates within isoprenoid biosynthesis; isopentenyl diphosphate biosynthesis via DXP pathway; isopentenyl diphosphate from 1-deoxy-D-xylulose 5-phosphate: step 3/6. In terms of biological role, catalyzes the phosphorylation of the position 2 hydroxy group of 4-diphosphocytidyl-2C-methyl-D-erythritol. The protein is 4-diphosphocytidyl-2-C-methyl-D-erythritol kinase of Rhizorhabdus wittichii (strain DSM 6014 / CCUG 31198 / JCM 15750 / NBRC 105917 / EY 4224 / RW1) (Sphingomonas wittichii).